The chain runs to 490 residues: Cytochrome P450 2C25 (490 aa).

Cys435 contributes to the heme binding site.

The protein belongs to the cytochrome P450 family. Heme is required as a cofactor.

The protein localises to the endoplasmic reticulum membrane. It is found in the microsome membrane. The catalysed reaction is an organic molecule + reduced [NADPH--hemoprotein reductase] + O2 = an alcohol + oxidized [NADPH--hemoprotein reductase] + H2O + H(+). In terms of biological role, catalyzes the hydroxylation of tolbutamide and the N-demethylation of aminopyrine and benzphetamine. Also has testosterone hydroxylase (16 beta) activity. This chain is Cytochrome P450 2C25 (CYP2C25), found in Mesocricetus auratus (Golden hamster).